We begin with the raw amino-acid sequence, 148 residues long: Small ribosomal subunit protein bS6 (148 aa).

Residues 97 to 148 are disordered; that stretch reads EEGPSAMLQRRDDRERGDRGDRGPRRDFDDRGPRRPREDDRPRRSREDEGDE.

Belongs to the bacterial ribosomal protein bS6 family.

Functionally, binds together with bS18 to 16S ribosomal RNA. The sequence is that of Small ribosomal subunit protein bS6 from Chelativorans sp. (strain BNC1).